Here is a 343-residue protein sequence, read N- to C-terminus: Probable dual-specificity RNA methyltransferase RlmN (343 aa).

Glu-92 serves as the catalytic Proton acceptor. Residues 98 to 328 (YHHGLTACIS…TTVRREMGAD (231 aa)) form the Radical SAM core domain. Residues Cys-105 and Cys-333 are joined by a disulfide bond. The [4Fe-4S] cluster site is built by Cys-112, Cys-116, and Cys-119. Residues 159-160 (GE), Ser-191, 214-216 (SLH), and Asn-290 contribute to the S-adenosyl-L-methionine site. The active-site S-methylcysteine intermediate is the Cys-333.

The protein belongs to the radical SAM superfamily. RlmN family. It depends on [4Fe-4S] cluster as a cofactor.

It localises to the cytoplasm. The catalysed reaction is adenosine(2503) in 23S rRNA + 2 reduced [2Fe-2S]-[ferredoxin] + 2 S-adenosyl-L-methionine = 2-methyladenosine(2503) in 23S rRNA + 5'-deoxyadenosine + L-methionine + 2 oxidized [2Fe-2S]-[ferredoxin] + S-adenosyl-L-homocysteine. The enzyme catalyses adenosine(37) in tRNA + 2 reduced [2Fe-2S]-[ferredoxin] + 2 S-adenosyl-L-methionine = 2-methyladenosine(37) in tRNA + 5'-deoxyadenosine + L-methionine + 2 oxidized [2Fe-2S]-[ferredoxin] + S-adenosyl-L-homocysteine. Specifically methylates position 2 of adenine 2503 in 23S rRNA and position 2 of adenine 37 in tRNAs. In Alkaliphilus oremlandii (strain OhILAs) (Clostridium oremlandii (strain OhILAs)), this protein is Probable dual-specificity RNA methyltransferase RlmN.